The chain runs to 107 residues: Ubiquitin-related modifier 1 (107 aa).

A 1-thioglycine modification is found at G107. Residue G107 forms a Glycyl lysine isopeptide (Gly-Lys) (interchain with K-? in acceptor proteins) linkage.

It belongs to the URM1 family. In terms of processing, C-terminal thiocarboxylation occurs in 2 steps, it is first acyl-adenylated (-COAMP) via the hesA/moeB/thiF part of UBA4, then thiocarboxylated (-COSH) via the rhodanese domain of UBA4.

It localises to the cytoplasm. The protein operates within tRNA modification; 5-methoxycarbonylmethyl-2-thiouridine-tRNA biosynthesis. Acts as a sulfur carrier required for 2-thiolation of mcm(5)S(2)U at tRNA wobble positions of cytosolic tRNA(Lys), tRNA(Glu) and tRNA(Gln). Serves as sulfur donor in tRNA 2-thiolation reaction by being thiocarboxylated (-COSH) at its C-terminus by the MOCS3 homolog UBA4. The sulfur is then transferred to tRNA to form 2-thiolation of mcm(5)S(2)U. Prior mcm(5) tRNA modification by the elongator complex is required for 2-thiolation. Also acts as a ubiquitin-like protein (UBL) that is covalently conjugated via an isopeptide bond to lysine residues of target proteins such as AHP1. The thiocarboxylated form serves as substrate for conjugation and oxidative stress specifically induces the formation of UBL-protein conjugates. This chain is Ubiquitin-related modifier 1, found in Mycosarcoma maydis (Corn smut fungus).